The primary structure comprises 194 residues: Molybdenum cofactor guanylyltransferase (194 aa).

GTP is bound by residues 12–14, Lys25, Asp71, and Asp101; that span reads LAG. Mg(2+) is bound at residue Asp101.

The protein belongs to the MobA family. In terms of assembly, monomer. The cofactor is Mg(2+).

It localises to the cytoplasm. The catalysed reaction is Mo-molybdopterin + GTP + H(+) = Mo-molybdopterin guanine dinucleotide + diphosphate. Functionally, transfers a GMP moiety from GTP to Mo-molybdopterin (Mo-MPT) cofactor (Moco or molybdenum cofactor) to form Mo-molybdopterin guanine dinucleotide (Mo-MGD) cofactor. In Salmonella typhimurium (strain LT2 / SGSC1412 / ATCC 700720), this protein is Molybdenum cofactor guanylyltransferase.